A 610-amino-acid chain; its full sequence is MTRPQAAAEDARNAMVAGLLASGISVNGLQPSHNPQVAAQMFTTATRLDPKMCDAWLARLLAGDQSIEVLAGAWAAVRTFGWETRRLGVTDLQFRPEVSDGLFLRLAITSVDSLACAYAAVLAEAKRYQEAAELLDATDPRHPFDAELVSYVRGVLYFRTKRWPDVLAQFPEATQWRHPELKAAGAAMATTALASLGVFEEAFRRAQEAIEGDRVPGAANIALYTQGMCLRHVGREEEAVELLRRVYSRDAKFTPAREALDNPNFRLILTDPETIEARTDPWDPDSAPTRAQTEAARHAEMAAKYLAEGDAELNAMLGMEQAKKEIKLIKSTTKVNLARAKMGLPVPVTSRHTLLLGPPGTGKTSVARAFTKQLCGLTVLRKPLVVETSRTKLLGRYMADAEKNTEEMLEGALGGAVFFDEMHTLHEKGYSQGDPYGNAIINTLLLYMENHRDELVVFGAGYAKAMEKMLEVNQGLRRRFSTVIEFFSYTPQELIALTQLMGRENEDVITEEESQVLLPSYTKFYMEQSYSEDGDLIRGIDLLGNAGFVRNVVEKARDHRSFRLDDEDLDAVLASDLTEFSEDQLRRFKELTREDLAEGLRAAVAEKKTK.

357 to 364 (GPPGTGKT) is a binding site for ATP.

This sequence belongs to the CbxX/CfxQ family. In terms of assembly, part of the ESX-5 / type VII secretion system (T7SS), which is composed of cytosolic and membrane components.

The protein localises to the cytoplasm. Its function is as follows. Part of an ESX-5 / type VII specialized secretion system (T7SS), which exports several proteins. EccA5 exhibits ATPase activity and may provide energy for the export of ESX-5 substrates. The polypeptide is ESX-5 secretion system protein EccA5 (Mycobacterium bovis (strain ATCC BAA-935 / AF2122/97)).